A 233-amino-acid chain; its full sequence is Tropomyosin (233 aa).

Residues 6–222 (FDTVNEKYQE…KERYKAISDE (217 aa)) adopt a coiled-coil conformation. Residues 48 to 88 (MERSEERLQTATEKLEEASKAADESERNRKVLENLNNASEE) form a disordered region. A compositionally biased stretch (basic and acidic residues) spans 51 to 79 (SEERLQTATEKLEEASKAADESERNRKVL).

This sequence belongs to the tropomyosin family. Homodimer.

Tropomyosin, in association with the troponin complex, plays a central role in the calcium dependent regulation of muscle contraction. This is Tropomyosin from Magallana gigas (Pacific oyster).